Here is a 282-residue protein sequence, read N- to C-terminus: 2,3,4,5-tetrahydropyridine-2,6-dicarboxylate N-succinyltransferase (282 aa).

Residues arginine 109 and aspartate 146 each coordinate substrate.

It belongs to the transferase hexapeptide repeat family. Homotrimer.

The protein localises to the cytoplasm. It catalyses the reaction (S)-2,3,4,5-tetrahydrodipicolinate + succinyl-CoA + H2O = (S)-2-succinylamino-6-oxoheptanedioate + CoA. It functions in the pathway amino-acid biosynthesis; L-lysine biosynthesis via DAP pathway; LL-2,6-diaminopimelate from (S)-tetrahydrodipicolinate (succinylase route): step 1/3. The sequence is that of 2,3,4,5-tetrahydropyridine-2,6-dicarboxylate N-succinyltransferase from Bartonella quintana (strain Toulouse) (Rochalimaea quintana).